The sequence spans 885 residues: Cadherin-related family member 3 (885 aa).

Residues 1–19 (MQEAIILLALLGAMSGGEA) form the signal peptide. Over 20-713 (LHLILLPATG…VYSPSAWYVP (694 aa)) the chain is Extracellular. 6 consecutive Cadherin domains span residues 23–132 (ILLP…PPQF), 136–236 (LAEG…VPRF), 237–344 (TSPT…NPAT), 346–466 (QKFT…RPSY), 462–566 (DRPS…KPIC), and 567–695 (TPNS…RPRV). Residues Asn186 and Asn257 are each glycosylated (N-linked (GlcNAc...) asparagine). Residue Asn624 is glycosylated (N-linked (GlcNAc...) asparagine). The helical transmembrane segment at 714 to 734 (FVITLGSILLLGLLVYLVVLL) threads the bilayer. The Cytoplasmic segment spans residues 735–885 (AKAIHRHCPC…RAYPKPHPGK (151 aa)). Residues 808–885 (MPKWKESSHQ…RAYPKPHPGK (78 aa)) form a disordered region.

In terms of assembly, (Microbial infection) Interacts (via N-terminus) with human rhinovirus C capsid proteins VP1, VP2 and VP3. Expressed in bronchial epithelium from adults and in fetal lung tissue.

It localises to the cell membrane. Its function is as follows. Cadherins are calcium-dependent cell adhesion proteins. They preferentially interact with themselves in a homophilic manner in connecting cells; cadherins may thus contribute to the sorting of heterogeneous cell types. (Microbial infection) Acts as a receptor for human rhinovirus C. This is Cadherin-related family member 3 (CDHR3) from Homo sapiens (Human).